A 1364-amino-acid polypeptide reads, in one-letter code: Collagen alpha-2(I) chain (1364 aa).

The first 22 residues, 1 to 22 (MLSFVDTRTLLLLAVTSCLATC), serve as a signal peptide directing secretion. Residue Q23 is modified to Pyrrolidone carboxylic acid. Residues 23–79 (QSLQEATARKGPSGDRGPRGERGPPGPPGRDGDDGIPGPPGPPGPPGPPGLGGNFAA) constitute a propeptide, N-terminal propeptide. A disordered region spans residues 26–1128 (QEATARKGPS…QPRSPTSLRP (1103 aa)). Residues 34 to 44 (PSGDRGPRGER) show a composition bias toward basic and acidic residues. Pro residues predominate over residues 59–71 (PGPPGPPGPPGPP). The residue at position 80 (Q80) is a Pyrrolidone carboxylic acid. K84 is modified (allysine). A compositionally biased stretch (low complexity) spans 93–130 (LMGPRGPPGASGAPGPQGFQGPPGEPGEPGQTGPAGAR). 4-hydroxyproline occurs at positions 100, 106, 115, 118, 121, 133, 136, 145, 151, 166, 169, and 172. The span at 139–153 (AGEDGHPGKPGRPGE) shows a compositional bias: basic and acidic residues. K175 is modified (5-hydroxylysine; alternate). A glycan (O-linked (Gal...) hydroxylysine; alternate) is linked at K175. Residues P190 and P193 each carry the 4-hydroxyproline modification. The residue at position 196 (K196) is a 5-hydroxylysine. Residues P199, P202, P208, P217, P226, P253, P256, and P259 each carry the 4-hydroxyproline modification. Residues 223–252 (VGAPGPAGARGSDGSVGPVGPAGPIGSAGP) are compositionally biased toward low complexity. K262 is subject to 5-hydroxylysine. 4 positions are modified to 4-hydroxyproline: P271, P286, P295, and P304. Low complexity predominate over residues 277-291 (AGPRGEVGLPGLSGP). The segment covering 298–319 (PGANGLPGAKGAAGLPGVAGAP) has biased composition (low complexity). Residue K307 is modified to 5-hydroxylysine. 5 positions are modified to 4-hydroxyproline: P313, P319, P322, P328, and P346. The span at 328 to 343 (PGPVGAAGATGARGLV) shows a compositional bias: low complexity. Position 352 is a 5-hydroxylysine (K352). 4-hydroxyproline occurs at positions 361, 367, 370, 391, 394, 400, 406, 439, and 442. A compositionally biased stretch (low complexity) spans 396 to 406 (LRGNPGSRGLP). Low complexity-rich tracts occupy residues 468 to 487 (LPGI…RGEP) and 511 to 535 (AGLA…PGLQ). Positions 536-545 (GVQGGKGEQG) are enriched in gly residues. 4 stretches are compositionally biased toward low complexity: residues 592–609 (PGES…SRGP), 621–643 (EPGV…PGER), 666–688 (SPGR…AGAN), and 715–735 (VGPA…QPGA). Over residues 736 to 745 (KGERGTKGPK) the composition is skewed to basic and acidic residues. Low complexity predominate over residues 748–763 (NGPVGPTGPVGAAGPS). Positions 773–782 (GSRGDGGPPG) are enriched in gly residues. Composition is skewed to low complexity over residues 783–793 (ATGFPGAAGRT), 861–874 (PQGL…LGLP), 891–930 (EPGP…NPGN), 948–961 (YPGN…AGAP), and 978–999 (EPGP…PSGP). Basic and acidic residues predominate over residues 1003–1014 (RGDKGEPGDKGP). Positions 1087–1101 (AGPPGPPGPPGPPGP) are enriched in pro residues. Positions 1118–1364 (DQPRSPTSLR…RLNIGPVCFK (247 aa)) are cleaved as a propeptide — C-terminal propeptide. One can recognise a Fibrillar collagen NC1 domain in the interval 1131–1364 (YEVDATLKSL…RLNIGPVCFK (234 aa)). 3 cysteine pairs are disulfide-bonded: C1161/C1193, C1201/C1362, and C1270/C1315. The Ca(2+) site is built by D1179, N1181, Q1182, C1184, and D1187. N1265 is a glycosylation site (N-linked (GlcNAc...) asparagine).

It belongs to the fibrillar collagen family. In terms of assembly, trimers of one alpha 2(I) and two alpha 1(I) chains. Interacts (via C-terminus) with TMEM131 (via PapD-L domain); the interaction is direct and is involved in assembly and TRAPPIII ER-to-Golgi transport complex-dependent secretion of collagen. In terms of processing, prolines at the third position of the tripeptide repeating unit (G-X-Y) are hydroxylated in some or all of the chains. As to expression, forms the fibrils of tendon, ligaments and bones. In bones the fibrils are mineralized with calcium hydroxyapatite.

The protein localises to the secreted. The protein resides in the extracellular space. Its subcellular location is the extracellular matrix. Type I collagen is a member of group I collagen (fibrillar forming collagen). This Bos taurus (Bovine) protein is Collagen alpha-2(I) chain (COL1A2).